Here is a 423-residue protein sequence, read N- to C-terminus: Core protease OPG083 (423 aa).

Active-site residues include H241, D248, and C328.

Belongs to the peptidase C57 family.

Its subcellular location is the virion. Late protein responsible for processing most or all of the viral core and membrane proteins known to undergo morphogenesis-associated proteolysis. These proteolytic events are involved in the transformation of immature virions (IV) into mature virions (MV). Probably cleaves at least the OPG129/A3, OPG136/A10, OPG098/L4, and OPG144/A17 precursors preferentially at Ala-Gly-|-Ala motifs. Also seems to process Ala-Gly-|-Ser and Ala-Gly-|-Thr motifs. This chain is Core protease OPG083 (OPG083), found in Bos taurus (Bovine).